The primary structure comprises 190 residues: Dynactin subunit 6 (190 aa).

Thr-186 is modified (phosphothreonine; by CDK1).

This sequence belongs to the dynactin subunits 5/6 family. Dynactin subunit 6 subfamily. As to quaternary structure, subunit of dynactin, a multiprotein complex part of a tripartite complex with dynein and a adapter, such as BICDL1, BICD2 or HOOK3. The dynactin complex is built around ACTR1A/ACTB filament and consists of an actin-related filament composed of a shoulder domain, a pointed end and a barbed end. Its length is defined by its flexible shoulder domain. The soulder is composed of 2 DCTN1 subunits, 4 DCTN2 and 2 DCTN3. The 4 DCNT2 (via N-terminus) bind the ACTR1A filament and act as molecular rulers to determine the length. The pointed end is important for binding dynein-dynactin cargo adapters. Consists of 4 subunits: ACTR10, DCNT4, DCTN5 and DCTN6. Within the complex DCTN6 forms a heterodimer with DCTN5. The barbed end is composed of a CAPZA1:CAPZB heterodimers, which binds ACTR1A/ACTB filament and dynactin and stabilizes dynactin. Interacts with PLK1. Interacts with N4BP2L1. In terms of processing, phosphorylation at Thr-186 by CDK1 during mitotic prometaphase creates a binding site for PLK1 that facilitates its recruitment to kinetochores.

Its subcellular location is the cytoplasm. It localises to the cytoskeleton. It is found in the chromosome. The protein resides in the centromere. The protein localises to the kinetochore. Its function is as follows. Part of the dynactin complex that activates the molecular motor dynein for ultra-processive transport along microtubules. The sequence is that of Dynactin subunit 6 (DCTN6) from Bos taurus (Bovine).